The chain runs to 917 residues: DNA repair endonuclease XPF (917 aa).

A helicase-like region spans residues 1–457; that stretch reads MEPGLSGERR…EVWVNVRKGD (457 aa). Leucine-zipper stretches follow at residues 233–254 and 270–298; these read LNAC…DLSL and LDPL…LQYL. K289 carries the post-translational modification N6-acetyllysine. Residues 454 to 479 are compositionally biased toward basic and acidic residues; the sequence is RKGDGPKRTTKSDKRPKAAPNKERAS. Disordered regions lie at residues 454-524 and 643-681; these read RKGD…SSPE and VPEE…QNGT. Positions 487 to 492 match the Nuclear localization signal motif; sequence KRKKQE. Residues 507–516 are compositionally biased toward basic and acidic residues; sequence EDKALEEDLC. Residue S522 is modified to Phosphoserine. Over residues 643–653 the composition is skewed to basic and acidic residues; sequence VPEEREGRDET. Positions 659–814 are nuclease; sequence RGSAALDAPT…PSPHATAELF (156 aa). An ERCC4 domain is found at 684–764; that stretch reads SIVVDMREFR…RPVLLIEFDP (81 aa). S765 carries the post-translational modification Phosphoserine. Positions 838 to 906 are hhH2, dimerization with ERCC1; that stretch reads TLPESDRYNP…QLHDFLHTAY (69 aa). K912 is subject to N6-acetyllysine.

It belongs to the XPF family. Heterodimer composed of ERCC1 and ERCC4/XPF. Interacts with SLX4/BTBD12; this interaction is direct and links the ERCC1-ERCC4/XPF complex to SLX4, which may coordinate the action of the structure-specific endonuclease during DNA repair. The cofactor is Mg(2+). Post-translationally, acetylation at Lys-912 by KAT5 promotes interaction with ERCC1 by disrupting a salt bridge between Asp-908 and Lys-912, thereby exposing a second binding site for ERCC1. Deacetylated by SIRT1.

The protein localises to the nucleus. The protein resides in the chromosome. In terms of biological role, catalytic component of a structure-specific DNA repair endonuclease responsible for the 5-prime incision during DNA repair, and which is essential for nucleotide excision repair (NER) and interstrand cross-link (ICL) repair. This Mus musculus (Mouse) protein is DNA repair endonuclease XPF.